Reading from the N-terminus, the 55-residue chain is ATP synthase F(0) complex subunit 8 (55 aa).

Residues 4–24 (LNPSPWFIILLFSWVIFMVIL) traverse the membrane as a helical segment.

It belongs to the ATPase protein 8 family. In terms of assembly, component of the ATP synthase complex composed at least of ATP5F1A/subunit alpha, ATP5F1B/subunit beta, ATP5MC1/subunit c (homooctomer), MT-ATP6/subunit a, MT-ATP8/subunit 8, ATP5ME/subunit e, ATP5MF/subunit f, ATP5MG/subunit g, ATP5MK/subunit k, ATP5MJ/subunit j, ATP5F1C/subunit gamma, ATP5F1D/subunit delta, ATP5F1E/subunit epsilon, ATP5PF/subunit F6, ATP5PB/subunit b, ATP5PD/subunit d, ATP5PO/subunit OSCP. ATP synthase complex consists of a soluble F(1) head domain (subunits alpha(3) and beta(3)) - the catalytic core - and a membrane F(0) domain - the membrane proton channel (subunits c, a, 8, e, f, g, k and j). These two domains are linked by a central stalk (subunits gamma, delta, and epsilon) rotating inside the F1 region and a stationary peripheral stalk (subunits F6, b, d, and OSCP).

It is found in the mitochondrion membrane. Functionally, subunit 8, of the mitochondrial membrane ATP synthase complex (F(1)F(0) ATP synthase or Complex V) that produces ATP from ADP in the presence of a proton gradient across the membrane which is generated by electron transport complexes of the respiratory chain. ATP synthase complex consist of a soluble F(1) head domain - the catalytic core - and a membrane F(1) domain - the membrane proton channel. These two domains are linked by a central stalk rotating inside the F(1) region and a stationary peripheral stalk. During catalysis, ATP synthesis in the catalytic domain of F(1) is coupled via a rotary mechanism of the central stalk subunits to proton translocation. In vivo, can only synthesize ATP although its ATP hydrolase activity can be activated artificially in vitro. Part of the complex F(0) domain. The sequence is that of ATP synthase F(0) complex subunit 8 from Scyliorhinus canicula (Small-spotted catshark).